Consider the following 159-residue polypeptide: Phosphopantetheine adenylyltransferase (159 aa).

A substrate-binding site is contributed by Ser8. ATP-binding positions include 8–9 and His16; that span reads SF. Residues Lys40, Thr72, and Arg86 each contribute to the substrate site. Residues 87–89, Glu97, and 122–128 each bind ATP; these read GLR and HSFVSSS.

This sequence belongs to the bacterial CoaD family. As to quaternary structure, homohexamer. Requires Mg(2+) as cofactor.

It localises to the cytoplasm. The enzyme catalyses (R)-4'-phosphopantetheine + ATP + H(+) = 3'-dephospho-CoA + diphosphate. Its pathway is cofactor biosynthesis; coenzyme A biosynthesis; CoA from (R)-pantothenate: step 4/5. Reversibly transfers an adenylyl group from ATP to 4'-phosphopantetheine, yielding dephospho-CoA (dPCoA) and pyrophosphate. The protein is Phosphopantetheine adenylyltransferase of Synechococcus sp. (strain JA-2-3B'a(2-13)) (Cyanobacteria bacterium Yellowstone B-Prime).